The sequence spans 579 residues: Mitogen-activated protein kinase kinase kinase 7 (579 aa).

Residues 1 to 300 (MSTASAASSS…FPGADEPLQY (300 aa)) are interaction with MAPK8IP1. Residues 36 to 291 (IEVEEVVGRG…KIMTHLMRYF (256 aa)) form the Protein kinase domain. Residues 42-50 (VGRGAFGVV) and K63 each bind ATP. K72 is covalently cross-linked (Glycyl lysine isopeptide (Lys-Gly) (interchain with G-Cter in ubiquitin)). Catalysis depends on D156, which acts as the Proton acceptor. A Glycyl lysine isopeptide (Lys-Gly) (interchain with G-Cter in ubiquitin) cross-link involves residue K158. 2 positions are modified to phosphothreonine; by autocatalysis: T184 and T187. S192 carries the phosphoserine; by autocatalysis modification. K209 participates in a covalent cross-link: Glycyl lysine isopeptide (Lys-Gly) (interchain with G-Cter in ubiquitin). 2 disordered regions span residues 301 to 339 (PCQYSDEGQSNSATSTGSFMDITSTNTSNKSDTNMEQVP) and 354 to 391 (KNQAKQQSESGRLSLGASRGSSVESLPPTSEGKRMSAD). Residues 306-322 (DEGQSNSATSTGSFMDI) show a composition bias toward polar residues. Composition is skewed to low complexity over residues 323 to 334 (TSTNTSNKSDTN) and 361 to 375 (SESGRLSLGASRGSS). A phosphoserine mark is found at S367, S389, and S412. A compositionally biased stretch (polar residues) spans 416–425 (LTVTGTDPGQ). The disordered stretch occupies residues 416–466 (LTVTGTDPGQVSSRSSSPSVRMITTSGPTSEKPARSHPWTPDDSTDTNGSD). Low complexity predominate over residues 426-436 (VSSRSSSPSVR). S428 carries the phosphoserine modification.

The protein belongs to the protein kinase superfamily. STE Ser/Thr protein kinase family. MAP kinase kinase kinase subfamily. As to quaternary structure, can form homodimer. Binds both upstream activators and downstream substrates in multimolecular complexes. Interacts with TAB1/MAP3K7IP1, TAB2/MAP3K7IP2 and TAB3/MAP3K7IP3. Identified in the TRIKA2 complex composed of MAP3K7/TAK1, TAB1/MAP3K7IP1 and TAB2/MAP3K7IP2. Interacts with PPM1L and PPM1B/PP2CB. Interaction with PP2A and PPP6C leads to its repressed activity. Interacts with TRAF6 and TAB1/MAP3K7IP1; during IL-1 signaling. Interacts with TAOK1 and TAOK2; interaction with TAOK2 interferes with MAP3K7 interaction with IKKA, thus preventing NF-kappa-B activation. Interacts with DYNC2I2 (via WD domains). Interacts with CYLD and RBCK1. Interacts with TGFBR1; induces MAP3K7/TAK1 activation by TRAF6. Interacts with MAPK8IP1 and SMAD6. Interacts with isoform 1 of VRK2. Interacts with DAB2; the interaction is induced by TGF-beta stimulation and may mediate TGF-beta stimulated JNK activation. Interacts with TRIM5. Part of a complex containing ITCH, NDFIP1 and MAP3K7. Interacts with IFIT5; the interaction synergizes the recruitment of IKK to MAP3K7 and enhances IKK phosphorylation. Interacts with PLEKHM1 (via N- and C-terminus). Found in a complex with SH3RF1, RAC2, MAP2K7/MKK7, MAPK8IP1/JIP1, MAPK8/JNK1 and MAPK9/JNK2. Interacts with SASH1. Interacts with RIPK1. Requires Mg(2+) as cofactor. Association with TAB1/MAP3K7IP1 promotes autophosphorylation at Ser-192 and subsequent activation. Association with TAB2/MAP3K7IP2, itself associated with free unanchored Lys-63 polyubiquitin chain, promotes autophosphorylation and subsequent activation of MAP3K7. Dephosphorylation at Ser-192 by PPM1B/PP2CB and at Thr-187 by PP2A and PPP6C leads to inactivation. Post-translationally, 'Lys-48'-linked polyubiquitination at Lys-72 is induced by TNFalpha, and leads to proteasomal degradation. Undergoes 'Lys-48'-linked polyubiquitination catalyzed by ITCH. 'Lys-63'-linked polyubiquitination at Lys-158 by TRIM8 does not lead to proteasomal degradation but contributes to autophosphorylation and activation. Deubiquitinated by CYLD, a protease that selectively cleaves 'Lys-63'-linked ubiquitin chains. Deubiquitinated by USP19; leading to negative regulation of TNF-alpha- and IL-1beta-triggered NF-kappa-B activation.

The protein localises to the cytoplasm. Its subcellular location is the cell membrane. The enzyme catalyses L-seryl-[protein] + ATP = O-phospho-L-seryl-[protein] + ADP + H(+). The catalysed reaction is L-threonyl-[protein] + ATP = O-phospho-L-threonyl-[protein] + ADP + H(+). Its activity is regulated as follows. Activated by pro-inflammatory cytokines and in response to physical and chemical stresses, including osmotic stress, oxidative stress, arsenic and ultraviolet light irradiation. Activated by 'Lys-63'-linked polyubiquitination and by autophosphorylation. Association with TAB1/MAP3K7IP1 and TAB2/MAP3K7IP2 promotes activation through autophosphorylation, whereas PPM1B/PP2CB, PP2A and PPP6C dephosphorylation leads to inactivation. Ceramides are also able to activate MAP3K7/TAK1. In terms of biological role, serine/threonine kinase which acts as an essential component of the MAP kinase signal transduction pathway. Plays an important role in the cascades of cellular responses evoked by changes in the environment. Mediates signal transduction of TRAF6, various cytokines including interleukin-1 (IL-1), transforming growth factor-beta (TGFB), TGFB-related factors like BMP2 and BMP4, toll-like receptors (TLR), tumor necrosis factor receptor CD40 and B-cell receptor (BCR). Once activated, acts as an upstream activator of the MKK/JNK signal transduction cascade and the p38 MAPK signal transduction cascade through the phosphorylation and activation of several MAP kinase kinases like MAP2K1/MEK1, MAP2K3/MKK3, MAP2K6/MKK6 and MAP2K7/MKK7. These MAP2Ks in turn activate p38 MAPKs and c-jun N-terminal kinases (JNKs); both p38 MAPK and JNK pathways control the transcription factors activator protein-1 (AP-1). Independently of MAP2Ks and p38 MAPKs, acts as a key activator of NF-kappa-B by promoting activation of the I-kappa-B-kinase (IKK) core complex. Mechanistically, recruited to polyubiquitin chains of RIPK2 and IKBKG/NEMO via TAB2/MAP3K7IP2 and TAB3/MAP3K7IP3, and catalyzes phosphorylation and activation of IKBKB/IKKB component of the IKK complex, leading to NF-kappa-B activation. In osmotic stress signaling, plays a major role in the activation of MAPK8/JNK1, but not that of NF-kappa-B. Promotes TRIM5 capsid-specific restriction activity. Phosphorylates RIPK1 at 'Ser-321' which positively regulates RIPK1 interaction with RIPK3 to promote necroptosis but negatively regulates RIPK1 kinase activity and its interaction with FADD to mediate apoptosis. Phosphorylates STING1 in response to cGAMP-activation, promoting association between STEEP1 and STING1 and STING1 translocation to COPII vesicles. This Bos taurus (Bovine) protein is Mitogen-activated protein kinase kinase kinase 7 (MAP3K7).